The following is a 168-amino-acid chain: 2-oxo-4-hydroxy-4-carboxy-5-ureidoimidazoline decarboxylase (168 aa).

The active-site Proton donor; for OHCU decarboxylase activity is His70. A compositionally biased stretch (basic and acidic residues) spans 70–79; it reads HPDLGERTEM. The tract at residues 70 to 93 is disordered; it reads HPDLGERTEMTDASEAEQASAELD. Substrate is bound by residues Pro71, 83-87, and 118-122; these read SEAEQ and FVMAV.

This sequence belongs to the OHCU decarboxylase family.

It carries out the reaction 5-hydroxy-2-oxo-4-ureido-2,5-dihydro-1H-imidazole-5-carboxylate + H(+) = (S)-allantoin + CO2. It functions in the pathway purine metabolism; urate degradation; (S)-allantoin from urate: step 3/3. Functionally, catalyzes the stereoselective decarboxylation of 2-oxo-4-hydroxy-4-carboxy-5-ureidoimidazoline (OHCU) to (S)-allantoin. In Haloferax volcanii (strain ATCC 29605 / DSM 3757 / JCM 8879 / NBRC 14742 / NCIMB 2012 / VKM B-1768 / DS2) (Halobacterium volcanii), this protein is 2-oxo-4-hydroxy-4-carboxy-5-ureidoimidazoline decarboxylase.